Reading from the N-terminus, the 132-residue chain is Small ribosomal subunit protein uS8 (132 aa).

Belongs to the universal ribosomal protein uS8 family. As to quaternary structure, part of the 30S ribosomal subunit. Contacts proteins S5 and S12.

Its function is as follows. One of the primary rRNA binding proteins, it binds directly to 16S rRNA central domain where it helps coordinate assembly of the platform of the 30S subunit. This Streptococcus sanguinis (strain SK36) protein is Small ribosomal subunit protein uS8.